Here is a 657-residue protein sequence, read N- to C-terminus: Serine/threonine-protein kinase BUR1 (657 aa).

The 307-residue stretch at 60–366 folds into the Protein kinase domain; it reads YREDEKLGQG…AMSAKHHPWF (307 aa). Residues 66-74 and Lys89 contribute to the ATP site; that span reads LGQGTFGEV. Asp195 functions as the Proton acceptor in the catalytic mechanism. Thr240 carries the post-translational modification Phosphothreonine; by CAK. The residue at position 400 (Ser400) is a Phosphoserine. Thr405 bears the Phosphothreonine mark. The segment at 414–657 is disordered; that stretch reads KGESPVVKNL…FQNSDIADLY (244 aa). Ser417 carries the post-translational modification Phosphoserine. Residues 489-501 show a composition bias toward low complexity; it reads NNSSRNNRFSGNS. Composition is skewed to polar residues over residues 535–552, 564–595, and 614–625; these read SRYQ…SPND, PETN…NGSR, and ISPSQGQHQLTS. The segment covering 627-649 has biased composition (basic and acidic residues); that stretch reads PIEKKNGSFKDERAKPDESKEFQ. Residue Ser634 is modified to Phosphoserine.

The protein belongs to the protein kinase superfamily. CMGC Ser/Thr protein kinase family. CDC2/CDKX subfamily. In terms of assembly, belongs to the BUR kinase complex composed of SGV1/BUR1 and BUR2. Interacts with BUR2 and RBP1.

The protein localises to the nucleus. It catalyses the reaction L-seryl-[protein] + ATP = O-phospho-L-seryl-[protein] + ADP + H(+). It carries out the reaction L-threonyl-[protein] + ATP = O-phospho-L-threonyl-[protein] + ADP + H(+). The catalysed reaction is [DNA-directed RNA polymerase] + ATP = phospho-[DNA-directed RNA polymerase] + ADP + H(+). In terms of biological role, serine/threonine-protein kinase component of the BUR kinase complex involved in transcription regulation. This complex phosphorylates 'Ser-120' of the UBC2/RAD6 ubiquitin-conjugating enzyme (E2), leading to monoubiquitination of histone H2B, the localization of the PAF1 complex to the chromatin, and the silencing of telomeric-associated genes. Also required for histone H3 'Lys-4' trimethylation. May phosphorylate the 'Ser-5' of the RBP1 carboxy-terminal domain (CTD) repeats. Necessary for the recovery from pheromone-induced growth arrest in the cell cycle G1 phase. The kinase activity of the complex requires the presence of BUR2. This is Serine/threonine-protein kinase BUR1 (SGV1) from Saccharomyces cerevisiae (strain ATCC 204508 / S288c) (Baker's yeast).